The primary structure comprises 649 residues: Acetylcholinesterase (649 aa).

A signal peptide spans 1–38; that stretch reads MAISCRQSRVLPMSLPLPLTIPLPLVLVLSLHLSGVCG. An intrachain disulfide couples Cys104 to Cys131. Residues Asn126 and Asn174 are each glycosylated (N-linked (GlcNAc...) asparagine). Ser276 serves as the catalytic Acyl-ester intermediate. An intrachain disulfide couples Cys330 to Cys345. Asn331 carries an N-linked (GlcNAc...) asparagine glycan. Catalysis depends on charge relay system residues Glu405 and His518. Residues Cys480 and Cys598 are joined by a disulfide bond. The N-linked (GlcNAc...) asparagine glycan is linked to Asn531. Ser619 is lipidated: GPI-anchor amidated serine. Residues 620–649 constitute a propeptide, removed in mature form; that stretch reads GSASISPRLQLLGIAALIYICAALRTKRVF.

This sequence belongs to the type-B carboxylesterase/lipase family. Homodimer; disulfide-linked. The active unit is formed by non-covalent association of the 55 kDa and 16 kDa subunits. In terms of processing, proteolytic cleavage into the 16 kDa subunit and the 55 kDa subunits originates from the hydrophilic peptide, aa 148-180, and is associated with excretion out of the cell. Post-translationally, neither N-glycosylation nor dimerization is required for enzyme activity or substrate specificity, but protects the protein against proteolytic digestion.

The protein resides in the synapse. The protein localises to the cell membrane. The enzyme catalyses acetylcholine + H2O = choline + acetate + H(+). In terms of biological role, rapidly hydrolyzes choline released into the synapse. It can hydrolyze butyrylthiocholine. This Drosophila melanogaster (Fruit fly) protein is Acetylcholinesterase (Ace).